The sequence spans 157 residues: 3-hydroxyacyl-[acyl-carrier-protein] dehydratase FabZ (157 aa).

Residue His58 is part of the active site.

The protein belongs to the thioester dehydratase family. FabZ subfamily.

It localises to the cytoplasm. It catalyses the reaction a (3R)-hydroxyacyl-[ACP] = a (2E)-enoyl-[ACP] + H2O. Involved in unsaturated fatty acids biosynthesis. Catalyzes the dehydration of short chain beta-hydroxyacyl-ACPs and long chain saturated and unsaturated beta-hydroxyacyl-ACPs. This chain is 3-hydroxyacyl-[acyl-carrier-protein] dehydratase FabZ, found in Rhizobium rhizogenes (strain K84 / ATCC BAA-868) (Agrobacterium radiobacter).